The sequence spans 190 residues: Xanthine phosphoribosyltransferase (190 aa).

Positions 20 and 27 each coordinate xanthine. Position 128 to 132 (128 to 132) interacts with 5-phospho-alpha-D-ribose 1-diphosphate; the sequence is ANGKA. Lys156 lines the xanthine pocket.

The protein belongs to the purine/pyrimidine phosphoribosyltransferase family. Xpt subfamily. Homodimer.

It localises to the cytoplasm. It carries out the reaction XMP + diphosphate = xanthine + 5-phospho-alpha-D-ribose 1-diphosphate. It functions in the pathway purine metabolism; XMP biosynthesis via salvage pathway; XMP from xanthine: step 1/1. Its function is as follows. Converts the preformed base xanthine, a product of nucleic acid breakdown, to xanthosine 5'-monophosphate (XMP), so it can be reused for RNA or DNA synthesis. This chain is Xanthine phosphoribosyltransferase, found in Finegoldia magna (strain ATCC 29328 / DSM 20472 / WAL 2508) (Peptostreptococcus magnus).